A 1009-amino-acid chain; its full sequence is Adhesion G-protein coupled receptor G2 (1009 aa).

The first 37 residues, 1 to 37 (MLFSGGQYSPVGRPEEVLLIYKIFLVIICFHVILVTS), serve as a signal peptide directing secretion. The Extracellular portion of the chain corresponds to 38–617 (LKENGNSSLL…SRTSLPPSQM (580 aa)). Residues Asn-43, Asn-77, Asn-91, Asn-103, Asn-109, Asn-127, Asn-136, Asn-154, Asn-178, and Asn-186 are each glycosylated (N-linked (GlcNAc...) asparagine). Disordered regions lie at residues 279 to 305 (MTPS…ASSP) and 325 to 346 (SHTL…PSVP). Residues 280-293 (TPSTPSLTQESNLP) show a composition bias toward polar residues. Residues Asn-362, Asn-427, Asn-448, Asn-453, Asn-520, Asn-534, Asn-539, Asn-543, and Asn-589 are each glycosylated (N-linked (GlcNAc...) asparagine). The GAIN-B domain maps to 453–611 (NTTTFAAQDP…GILLDLSRTS (159 aa)). Disulfide bonds link Cys-562/Cys-593 and Cys-581/Cys-595. Residues 562–611 (CVFWDLGRNGGKGGWSSDGCSVKDKRMNETICTCSHLTSFGILLDLSRTS) are GPS. Positions 600-611 (SFGILLDLSRTS) are stachel. Residues 618 to 640 (MALTFITYIGCGLSSIFLSVTLV) traverse the membrane as a helical segment. The Cytoplasmic portion of the chain corresponds to 641 to 655 (TYIAFEKIRRDYPSK). A helical transmembrane segment spans residues 656–679 (ILIQLCAALLLLNLIFLLDSWIAL). The Extracellular portion of the chain corresponds to 680–683 (YNTR). Residues 684–709 (GFCIAVAVFLHYFLLVSFTWMGLEAF) form a helical membrane-spanning segment. Cys-686 and Cys-770 form a disulfide bridge. Over 710–728 (HMYLALVKVFNTYIRKYIL) the chain is Cytoplasmic. A helical transmembrane segment spans residues 729–751 (KFCIVGWGIPAVVVSIVLTISPD). The Extracellular portion of the chain corresponds to 752-776 (NYGIGSYGKFPNGTPDDFCWINSNV). Residues 777–802 (VFYITVVGYFCVIFLLNVSMFIVVLV) form a helical membrane-spanning segment. The Cytoplasmic portion of the chain corresponds to 803-823 (QLCRIKKKKQLGAQRKTSIQD). The chain crosses the membrane as a helical span at residues 824–845 (LRSIAGLTFLLGITWGFAFFAW). The Extracellular segment spans residues 846-850 (GPVNV). Asn-849 carries an N-linked (GlcNAc...) asparagine glycan. A helical membrane pass occupies residues 851 to 872 (TFMYLFAIFNTLQGFFIFIFYC). Asn-860 is a binding site for 3beta-hydroxyandrost-5-en-17-one. Residues 873–1009 (AAKENVRKQW…RGSLHFIEQM (137 aa)) are Cytoplasmic-facing. Ser-1002 is subject to Phosphoserine.

It belongs to the G-protein coupled receptor 2 family. Adhesion G-protein coupled receptor (ADGR) subfamily. In terms of assembly, heterodimer of 2 chains generated by proteolytic processing; the large extracellular N-terminal fragment and the membrane-bound C-terminal fragment predominantly remain associated and non-covalently linked. Interacts with CFTR. Post-translationally, proteolytically cleaved into 2 subunits, an extracellular subunit and a seven-transmembrane subunit. In terms of processing, highly glycosylated. Epididymis-specific expression (at protein level). Associated with apical membranes of efferent ductule and proximal epididymal duct epithelia. Mainly expressed in the nonciliated principal cells of the proximal excurrent ducts.

Its subcellular location is the apical cell membrane. With respect to regulation, forms a heterodimer of 2 chains generated by proteolytic processing that remain associated through non-covalent interactions mediated by the GAIN-B domain. In the inactivated receptor, the Stachel sequence (also named stalk) is embedded in the GAIN-B domain, where it adopts a beta-strand conformation. On activation, the Stachel moves into the 7 transmembrane region and adopts a twisted hook-shaped configuration that forms contacts within the receptor, leading to coupling of a G-alpha protein, which activates signaling. The cleaved GAIN-B and N-terminal domains can then dissociate from the rest of the receptor. Deoxycorticosterone (DOC) acts as an antagonist of ADGRG2. Its function is as follows. Adhesion G-protein coupled receptor (aGPCR) for steroid hormones, such as dehydroepiandrosterone (DHEA; also named 3beta-hydroxyandrost-5-en-17-one) and androstenedione. Involved in a signal transduction pathway controlling epididymal function and male fertility. Ligand binding causes a conformation change that triggers signaling via guanine nucleotide-binding proteins (G proteins) and modulates the activity of downstream effectors, such as adenylate cyclase. ADGRG2 is coupled to G(s) G proteins and mediates activation of adenylate cyclase activity. Also able to couple with G(q) G proteins in vitro. May regulate fluid exchange within epididymis. The sequence is that of Adhesion G-protein coupled receptor G2 from Mus musculus (Mouse).